Consider the following 227-residue polypeptide: MPKGIIGKKIGMTRVFKDGKAIPVTVIQVEPNYVVNIRTEDKDGYSAVVLGTGEKKEKRTPKPMLAIFKKAGLKPLRHLAEFPLKEGEQPEPGQEVKVEDVFEKGDLVDVTGTSKGRGFASAMKRWDFSGFKKSHGSRYHRAVGSIGACSDPGRVWKTKRMAGHYGNETITVQGLEVVDIIPEKNIILVKGSVPGAPKSVVKLKESVIIHRRKGKRKLERAKAVYAS.

This sequence belongs to the universal ribosomal protein uL3 family. As to quaternary structure, part of the 50S ribosomal subunit. Forms a cluster with proteins L14 and L19.

Its function is as follows. One of the primary rRNA binding proteins, it binds directly near the 3'-end of the 23S rRNA, where it nucleates assembly of the 50S subunit. This chain is Large ribosomal subunit protein uL3, found in Persephonella marina (strain DSM 14350 / EX-H1).